Consider the following 407-residue polypeptide: tRNA (guanine(9)-N1)-methyltransferase (407 aa).

The segment covering 1–19 has biased composition (basic and acidic residues); the sequence is MDLDPAHKPSQAEETKEQG. Disordered stretches follow at residues 1–105 and 220–256; these read MDLD…VRKR and ENMI…PRPE. The segment covering 20-32 has biased composition (low complexity); it reads NEQGQVEQNQAQQ. A compositionally biased stretch (basic residues) spans 91–103; sequence LKRKDSRIARKVR. The 237-residue stretch at 120-356 folds into the SAM-dependent MTase TRM10-type domain; it reads ANKQKPPSVN…SVIPKRKGGK (237 aa). S-adenosyl-L-methionine contacts are provided by residues 263–264, G283, 287–291, C295, L309, and 321–323; these read LS, DKNRE, and TVL. The Proton acceptor role is filled by D287. Positions 353–407 are disordered; the sequence is KGGKLKEQQGASGETQETEEAEAEDPEEENEETKDPDAEASASKQNTPKVEVTSK. Positions 368-386 are enriched in acidic residues; that stretch reads QETEEAEAEDPEEENEETK. Residues 394–407 are compositionally biased toward polar residues; that stretch reads ASKQNTPKVEVTSK.

The protein belongs to the class IV-like SAM-binding methyltransferase superfamily. TRM10 family. In terms of assembly, monomer.

The protein resides in the cytoplasm. It is found in the nucleus. The catalysed reaction is guanosine(9) in tRNA + S-adenosyl-L-methionine = N(1)-methylguanosine(9) in tRNA + S-adenosyl-L-homocysteine + H(+). Functionally, S-adenosyl-L-methionine-dependent guanine N(1)-methyltransferase that catalyzes the formation of N(1)-methylguanine at position 9 (m1G9) in cytoplasmic tRNA. This chain is tRNA (guanine(9)-N1)-methyltransferase, found in Gibberella zeae (strain ATCC MYA-4620 / CBS 123657 / FGSC 9075 / NRRL 31084 / PH-1) (Wheat head blight fungus).